Reading from the N-terminus, the 427-residue chain is Lupus La protein homolog B (427 aa).

One can recognise an HTH La-type RNA-binding domain in the interval 6–98 (DKEQLDLDTK…RRSPAKPLPE (93 aa)). One can recognise an RRM domain in the interval 110–202 (RSVYIKGFPT…EERKLNKSEE (93 aa)). Disordered stretches follow at residues 193–220 (EERK…AEDA) and 319–427 (EGKQ…VGDQ). One can recognise a xRRM domain in the interval 226-348 (EERVGCLLKF…KGRGGKGNDS (123 aa)). Residues 315-331 (KKIMEGKQESFNKRKGR) carry the Nuclear localization signal motif. 2 stretches are compositionally biased toward basic residues: residues 327 to 342 (KRKG…KGRG) and 351 to 360 (RKKIQFQGKK). The segment covering 365–376 (SSDDEDDMEESE) has biased composition (acidic residues). Basic and acidic residues predominate over residues 405–427 (RALDDKAEDGPAVKQSKTEVGDQ).

Phosphorylated.

The protein localises to the nucleus. La protein plays a role in the transcription of RNA polymerase III. It is most probably a transcription termination factor. Binds to the 3' termini of virtually all nascent polymerase III transcripts. This chain is Lupus La protein homolog B (ssb-b), found in Xenopus laevis (African clawed frog).